The sequence spans 256 residues: Thiazole synthase (256 aa).

Lys96 functions as the Schiff-base intermediate with DXP in the catalytic mechanism. 1-deoxy-D-xylulose 5-phosphate is bound by residues Gly157, 184–185 (AG), and 206–207 (NT).

This sequence belongs to the ThiG family. Homotetramer. Forms heterodimers with either ThiH or ThiS.

It is found in the cytoplasm. It carries out the reaction [ThiS sulfur-carrier protein]-C-terminal-Gly-aminoethanethioate + 2-iminoacetate + 1-deoxy-D-xylulose 5-phosphate = [ThiS sulfur-carrier protein]-C-terminal Gly-Gly + 2-[(2R,5Z)-2-carboxy-4-methylthiazol-5(2H)-ylidene]ethyl phosphate + 2 H2O + H(+). The protein operates within cofactor biosynthesis; thiamine diphosphate biosynthesis. In terms of biological role, catalyzes the rearrangement of 1-deoxy-D-xylulose 5-phosphate (DXP) to produce the thiazole phosphate moiety of thiamine. Sulfur is provided by the thiocarboxylate moiety of the carrier protein ThiS. In vitro, sulfur can be provided by H(2)S. The chain is Thiazole synthase from Brucella abortus (strain S19).